The primary structure comprises 159 residues: 2-C-methyl-D-erythritol 2,4-cyclodiphosphate synthase (159 aa).

Residues D8 and H10 each coordinate a divalent metal cation. 4-CDP-2-C-methyl-D-erythritol 2-phosphate is bound by residues 8-10 (DVH) and 34-35 (HS). H42 provides a ligand contact to a divalent metal cation. 4-CDP-2-C-methyl-D-erythritol 2-phosphate contacts are provided by residues 56-58 (DIG), 61-65 (FPDTD), 100-106 (AQAPKML), 132-135 (TTTE), F139, and R142.

Belongs to the IspF family. In terms of assembly, homotrimer. A divalent metal cation serves as cofactor.

It catalyses the reaction 4-CDP-2-C-methyl-D-erythritol 2-phosphate = 2-C-methyl-D-erythritol 2,4-cyclic diphosphate + CMP. Its pathway is isoprenoid biosynthesis; isopentenyl diphosphate biosynthesis via DXP pathway; isopentenyl diphosphate from 1-deoxy-D-xylulose 5-phosphate: step 4/6. In terms of biological role, involved in the biosynthesis of isopentenyl diphosphate (IPP) and dimethylallyl diphosphate (DMAPP), two major building blocks of isoprenoid compounds. Catalyzes the conversion of 4-diphosphocytidyl-2-C-methyl-D-erythritol 2-phosphate (CDP-ME2P) to 2-C-methyl-D-erythritol 2,4-cyclodiphosphate (ME-CPP) with a corresponding release of cytidine 5-monophosphate (CMP). The polypeptide is 2-C-methyl-D-erythritol 2,4-cyclodiphosphate synthase (Salmonella arizonae (strain ATCC BAA-731 / CDC346-86 / RSK2980)).